A 327-amino-acid polypeptide reads, in one-letter code: Delta(3,5)-Delta(2,4)-dienoyl-CoA isomerase, mitochondrial (327 aa).

The transit peptide at 1–33 directs the protein to the mitochondrion; that stretch reads MATAMTVSSKLRGLLMQQLRGTSQLYFNISLRS. 115-119 contacts substrate; sequence SGIDL. An N6-acetyllysine modification is found at Lys147. Gly173 provides a ligand contact to substrate. Lys230 is modified (N6-succinyllysine). A Phosphoserine modification is found at Ser267. Lys316 is subject to N6-succinyllysine. A Microbody targeting signal motif is present at residues 325–327; sequence SKL. Lys326 bears the N6-acetyllysine mark.

This sequence belongs to the enoyl-CoA hydratase/isomerase family. Homohexamer.

It is found in the mitochondrion. Its subcellular location is the peroxisome. It catalyses the reaction (3E,5Z)-octadienoyl-CoA = (2E,4E)-octadienoyl-CoA. The catalysed reaction is (3E,5Z,8Z,11Z,14Z)-eicosapentaenoyl-CoA = (2E,4E,8Z,11Z,14Z)-eicosapentaenoyl-CoA. Its pathway is lipid metabolism; fatty acid beta-oxidation. Its function is as follows. Isomerization of 3-trans,5-cis-dienoyl-CoA to 2-trans,4-trans-dienoyl-CoA. This Mus musculus (Mouse) protein is Delta(3,5)-Delta(2,4)-dienoyl-CoA isomerase, mitochondrial.